The chain runs to 424 residues: Hemagglutinin-esterase (424 aa).

The first 16 residues, 1-16 (MFLLPRFVLVSCIIGS), serve as a signal peptide directing secretion. Residues 7-127 (FVLVSCIIGS…SNDIWMQNKG (121 aa)) form an esterase domain 1 region. Residues 17 to 392 (LGFDNPPTNV…PICVYDPLPL (376 aa)) are Virion surface-facing. Ser-40 acts as the Nucleophile in catalysis. A disulfide bond links Cys-44 and Cys-65. N-linked (GlcNAc...) asparagine; by host glycans are attached at residues Asn-54, Asn-89, Asn-153, Asn-236, and Asn-301. Cystine bridges form between Cys-113–Cys-162, Cys-197–Cys-276, and Cys-205–Cys-249. The segment at 128 to 266 (LFYTQVYKNM…GNYLAISNEL (139 aa)) is receptor binding. The segment at 267-379 (LLTVPTKAIC…RCPTAADINN (113 aa)) is esterase domain 2. Cys-307 and Cys-312 form a disulfide bridge. N-linked (GlcNAc...) asparagine; by host glycosylation is present at Asn-316. Catalysis depends on charge relay system residues Asp-326 and His-329. The cysteines at positions 347 and 371 are disulfide-linked. Asn-358 carries an N-linked (GlcNAc...) asparagine; by host glycan. Residues 393–413 (ILLGILLGVAVIIIVVLLLYF) traverse the membrane as a helical segment. Residues 414 to 424 (MVDNGTRLHDA) are Intravirion-facing. Residue Asn-417 is glycosylated (N-linked (GlcNAc...) asparagine; by host).

The protein belongs to the influenza type C/coronaviruses hemagglutinin-esterase family. As to quaternary structure, homodimer; disulfide-linked. Forms a complex with the M protein in the pre-Golgi. Associates then with S-M complex to form a ternary complex S-M-HE. N-glycosylated in the host RER.

It localises to the virion membrane. The protein localises to the host cell membrane. It carries out the reaction N-acetyl-9-O-acetylneuraminate + H2O = N-acetylneuraminate + acetate + H(+). It catalyses the reaction N-acetyl-4-O-acetylneuraminate + H2O = N-acetylneuraminate + acetate + H(+). Functionally, structural protein that makes short spikes at the surface of the virus. Contains receptor binding and receptor-destroying activities. Mediates de-O-acetylation of N-acetyl-4-O-acetylneuraminic acid, which is probably the receptor determinant recognized by the virus on the surface of erythrocytes and susceptible cells. This receptor-destroying activity is important for virus release as it probably helps preventing self-aggregation and ensures the efficient spread of the progeny virus from cell to cell. May serve as a secondary viral attachment protein for initiating infection, the spike protein being the major one. May become a target for both the humoral and the cellular branches of the immune system. The chain is Hemagglutinin-esterase from Bovine coronavirus (strain LY-138) (BCoV).